A 292-amino-acid chain; its full sequence is Glycine-rich RNA-binding protein RZ1B (292 aa).

The RRM domain maps to 12–90 (SRIFVGGLSW…KVISVNKAEP (79 aa)). Ser20 bears the Phosphoserine mark. The tract at residues 93-114 (GGEDVDQLKKGGGYSSRGKGTE) is disordered. The CCHC-type zinc-finger motif lies at 117–132 (CFKCRRPGHWARDCPS). 2 stretches are compositionally biased toward basic and acidic residues: residues 180 to 210 (DGRR…HYPF) and 220 to 268 (FVSD…EGRP). A disordered region spans residues 180–292 (DGRRDRDGGR…GGRPSSYERW (113 aa)).

In terms of tissue distribution, expressed in roots, rosette and cauline leaves, stems, floral buds and flowers.

It is found in the nucleus. Its function is as follows. Binds RNA and DNA sequences non-specifically. May be involved in tolerance to cold stress. In Arabidopsis thaliana (Mouse-ear cress), this protein is Glycine-rich RNA-binding protein RZ1B.